The sequence spans 70 residues: Putative membrane protein insertion efficiency factor (70 aa).

This sequence belongs to the UPF0161 family.

Its subcellular location is the cell membrane. Its function is as follows. Could be involved in insertion of integral membrane proteins into the membrane. The chain is Putative membrane protein insertion efficiency factor from Finegoldia magna (strain ATCC 29328 / DSM 20472 / WAL 2508) (Peptostreptococcus magnus).